The following is a 236-amino-acid chain: 2-C-methyl-D-erythritol 4-phosphate cytidylyltransferase (236 aa).

Belongs to the IspD/TarI cytidylyltransferase family. IspD subfamily. As to quaternary structure, homodimer.

It catalyses the reaction 2-C-methyl-D-erythritol 4-phosphate + CTP + H(+) = 4-CDP-2-C-methyl-D-erythritol + diphosphate. It participates in isoprenoid biosynthesis; isopentenyl diphosphate biosynthesis via DXP pathway; isopentenyl diphosphate from 1-deoxy-D-xylulose 5-phosphate: step 2/6. Functionally, catalyzes the formation of 4-diphosphocytidyl-2-C-methyl-D-erythritol from CTP and 2-C-methyl-D-erythritol 4-phosphate (MEP). The sequence is that of 2-C-methyl-D-erythritol 4-phosphate cytidylyltransferase from Escherichia coli O139:H28 (strain E24377A / ETEC).